The following is a 102-amino-acid chain: Small ribosomal subunit protein uS10 (102 aa).

Belongs to the universal ribosomal protein uS10 family. As to quaternary structure, part of the 30S ribosomal subunit.

Functionally, involved in the binding of tRNA to the ribosomes. This chain is Small ribosomal subunit protein uS10, found in Methanosarcina mazei (strain ATCC BAA-159 / DSM 3647 / Goe1 / Go1 / JCM 11833 / OCM 88) (Methanosarcina frisia).